Here is a 1150-residue protein sequence, read N- to C-terminus: ATP-dependent helicase/deoxyribonuclease subunit B (1150 aa).

An ATP-binding site is contributed by 8-15; sequence GRAGSGKS. [4Fe-4S] cluster is bound by residues C789, C1109, C1112, and C1118.

This sequence belongs to the helicase family. AddB/RexB type 1 subfamily. In terms of assembly, heterodimer of AddA and AddB. Mg(2+) is required as a cofactor. Requires [4Fe-4S] cluster as cofactor.

The heterodimer acts as both an ATP-dependent DNA helicase and an ATP-dependent, dual-direction single-stranded exonuclease. Recognizes the chi site generating a DNA molecule suitable for the initiation of homologous recombination. The AddB subunit has 5' -&gt; 3' nuclease activity but not helicase activity. This Clostridium kluyveri (strain NBRC 12016) protein is ATP-dependent helicase/deoxyribonuclease subunit B.